The chain runs to 850 residues: Ras GTPase-activating protein 2 (850 aa).

The span at 1–24 (MAAAAPAAAAASSEAPAASATAEP) shows a compositional bias: low complexity. Positions 1–32 (MAAAAPAAAAASSEAPAASATAEPEAGDQDSR) are disordered. Alanine 2 is subject to N-acetylalanine. C2 domains follow at residues 20–138 (ATAE…ETWF) and 149–289 (VQGK…QAWY). A Ras-GAP domain is found at 372 to 589 (DKLVPFATAV…IAVKKFLDEI (218 aa)). At serine 555 the chain carries Phosphoserine. Residues 604 to 706 (VHLKEGEMYK…WIDVLCRVSR (103 aa)) form the PH domain. The Btk-type zinc finger occupies 708 to 744 (NQNRLSFYHPSVYLNGNWLCCQETGENTLGCKPCTAG). Zn(2+)-binding residues include histidine 716, cysteine 727, cysteine 728, and cysteine 738. The disordered stretch occupies residues 825 to 850 (HEKYRKKRSSSAKYGSKENPIVGKAS).

It localises to the cytoplasm. It is found in the perinuclear region. Inhibitory regulator of the Ras-cyclic AMP pathway. Binds inositol tetrakisphosphate (IP4). The polypeptide is Ras GTPase-activating protein 2 (RASA2) (Homo sapiens (Human)).